Reading from the N-terminus, the 533-residue chain is MKLLAFRRLLRIQRVVVRYRLDDLILELPMLPWWLRLLGAALPWRWLPRRKLELTRGARLRLALQDLGPIFIKFGQILSTRRDLLPDDIANELAWLQDKVPPFPPELAVKRIEEQLGAKIEQVFARFEREPLASASVAQVHAARLKSGEEVVVKVIRPNLEPVIRSDIAWLFILARLAERVSSEARRLHPVEVVSDYEKTIVDELDLLREAANASQLRRNFEGSPLLYVPQVYWDWCRPKVLVMERIYGIPVTDLETLRDQRTDFKALAERGVEIFFTQVFRDSFFHADMHPGNIFVSTRAPWSPQYIAVDCGIVGSLTDEDQDYLARNLIAFFKRDYRKVAQLHIDSGWVPAETKVNDFEAAIRTVCEPIFEKPLKDISFGQVLLRLFQTARRFNMEIQPQLVLLQKTLLNIEGLGRQLYPELDLWATAQPFLERWMRERVSPKQLLRNFQQQVEQVPHLSQMARDTLERLSQPHAHNAPPPEWKSSRHDWLGRLVGAVLLVGAAEVGLGQQLEAWPAWVMLAGGVFLILRR.

Residues 24-44 (LILELPMLPWWLRLLGAALPW) form a helical membrane-spanning segment. One can recognise a Protein kinase domain in the interval 126 to 494 (RFEREPLASA…WKSSRHDWLG (369 aa)). Residues 132–140 (LASASVAQV) and Lys-154 each bind ATP. Asp-289 serves as the catalytic Proton acceptor. The chain crosses the membrane as a helical span at residues 510–530 (LGQQLEAWPAWVMLAGGVFLI).

The protein belongs to the ABC1 family. UbiB subfamily.

It localises to the cell inner membrane. It participates in cofactor biosynthesis; ubiquinone biosynthesis [regulation]. In terms of biological role, is probably a protein kinase regulator of UbiI activity which is involved in aerobic coenzyme Q (ubiquinone) biosynthesis. The chain is Probable protein kinase UbiB from Pseudomonas paraeruginosa (strain DSM 24068 / PA7) (Pseudomonas aeruginosa (strain PA7)).